A 300-amino-acid chain; its full sequence is Serine/arginine-rich splicing factor SR34A (300 aa).

Residues 7-82 enclose the RRM 1 domain; sequence RSIYVGNLPG…CRLRVELAHG (76 aa). Disordered regions lie at residues 81-110 and 198-300; these read HGGR…GGGG and YESS…EGSV. Over residues 94–110 the composition is skewed to gly residues; that stretch reads GYGGGGSGYGGGGGGGG. An RRM 2 domain is found at 122–200; that stretch reads FRVIVRGLPS…GFIRVKKYES (79 aa). Basic residues predominate over residues 203-239; sequence SRSRSPSRSRSRSRSRSRSRGRGRSHSRSRSLSRSKS. Residues Ser207, Ser209, Ser231, Ser233, Ser239, Ser259, Ser275, and Ser285 each carry the phosphoserine modification. A compositionally biased stretch (low complexity) spans 253–262; that stretch reads SRSISKSRSP. Over residues 275 to 287 the composition is skewed to basic residues; it reads SRSKSRSRSRSRS.

Belongs to the splicing factor SR family. SR subfamily. As to quaternary structure, component of the spliceosome.

Its subcellular location is the nucleus speckle. It is found in the nucleus. The protein localises to the nucleoplasm. Its function is as follows. Probably involved in intron recognition and spliceosome assembly. This Arabidopsis thaliana (Mouse-ear cress) protein is Serine/arginine-rich splicing factor SR34A (SR34A).